Consider the following 89-residue polypeptide: Small ribosomal subunit protein uS15 (89 aa).

Belongs to the universal ribosomal protein uS15 family. As to quaternary structure, part of the 30S ribosomal subunit. Forms a bridge to the 50S subunit in the 70S ribosome, contacting the 23S rRNA.

In terms of biological role, one of the primary rRNA binding proteins, it binds directly to 16S rRNA where it helps nucleate assembly of the platform of the 30S subunit by binding and bridging several RNA helices of the 16S rRNA. Its function is as follows. Forms an intersubunit bridge (bridge B4) with the 23S rRNA of the 50S subunit in the ribosome. The protein is Small ribosomal subunit protein uS15 of Pelodictyon phaeoclathratiforme (strain DSM 5477 / BU-1).